Reading from the N-terminus, the 371-residue chain is Ecto-ADP-ribosyltransferase 3 (371 aa).

A signal peptide spans 1 to 26 (MKMGHFEMVTTLLAAAVLMDIFQVKA). A disulfide bond links Cys-43 and Cys-255. The TR mART core domain maps to 64 to 250 (ALLRMVWDNA…LVLQSINSTC (187 aa)). NAD(+)-binding residues include Tyr-101 and Asn-182. Residues 306-346 (VLQTEENPLLPDEKPDRSRGKANNPTPGLVPGPKSHPSASS) are disordered. A lipid anchor (GPI-anchor amidated serine) is attached at Ser-345. The propeptide at 346-371 (SGNTLLPSVMASTILLVASAVNFIEL) is removed in mature form.

Belongs to the Arg-specific ADP-ribosyltransferase family.

It is found in the cell membrane. It carries out the reaction L-arginyl-[protein] + NAD(+) = N(omega)-(ADP-D-ribosyl)-L-arginyl-[protein] + nicotinamide + H(+). This chain is Ecto-ADP-ribosyltransferase 3 (Art3), found in Mus musculus (Mouse).